The following is a 49-amino-acid chain: Large ribosomal subunit protein bL33 (49 aa).

Belongs to the bacterial ribosomal protein bL33 family.

This Lactobacillus acidophilus (strain ATCC 700396 / NCK56 / N2 / NCFM) protein is Large ribosomal subunit protein bL33.